The primary structure comprises 554 residues: (S)-1-hydroxy-N-methylcanadine 13-hydroxylase CYP82X2 (554 aa).

Residues 23-43 (IISTFIVTIISIVFLYTVLLI) traverse the membrane as a helical segment. Cysteine 494 lines the heme pocket.

This sequence belongs to the cytochrome P450 family. The cofactor is heme. As to expression, highly expressed in capsules. Expressed is stems.

It is found in the membrane. The enzyme catalyses (S)-1-hydroxy-N-methylcanadine + reduced [NADPH--hemoprotein reductase] + O2 = (13S,14R)-1,13-dihydroxy-N-methylcanadine + oxidized [NADPH--hemoprotein reductase] + H2O + H(+). It participates in alkaloid biosynthesis. Functionally, cytochrome P450 involved in the biosynthesis of the benzylisoquinoline alkaloid noscapine. Converts (S)-1-hydroxy-N-methylcanadine to (13S,14R)-1,13-dihydroxy-N-methylcanadine. In Papaver somniferum (Opium poppy), this protein is (S)-1-hydroxy-N-methylcanadine 13-hydroxylase CYP82X2.